Reading from the N-terminus, the 141-residue chain is MALERTFSIVKPDAVERNLIGEIYHRIEKAGLRIVAAKMVHLTEEQASGFYAEHEGKPFFPALKEFMTSGPIMVQVLEGEDAIARYRELMGKTNPEEAACGTIRADYALSMRHNSVHGSDSPESAAREIEFFFPESEICPR.

Residues lysine 11, phenylalanine 59, arginine 87, threonine 93, arginine 104, and asparagine 114 each coordinate ATP. Histidine 117 (pros-phosphohistidine intermediate) is an active-site residue.

Belongs to the NDK family. In terms of assembly, homotetramer. Requires Mg(2+) as cofactor.

Its subcellular location is the cytoplasm. It catalyses the reaction a 2'-deoxyribonucleoside 5'-diphosphate + ATP = a 2'-deoxyribonucleoside 5'-triphosphate + ADP. The enzyme catalyses a ribonucleoside 5'-diphosphate + ATP = a ribonucleoside 5'-triphosphate + ADP. Functionally, major role in the synthesis of nucleoside triphosphates other than ATP. The ATP gamma phosphate is transferred to the NDP beta phosphate via a ping-pong mechanism, using a phosphorylated active-site intermediate. This Vibrio campbellii (strain ATCC BAA-1116) protein is Nucleoside diphosphate kinase.